The chain runs to 193 residues: MMINIQEDKLVSAHDAEEFLRFFNSGDEALQQEATTLLTREAHLLDIQAYRAWLEHCVDSEVKYQIISRELRSASERRYQLNETMNIFNENYEQLEVRVAHQLDPQNWGNSPKVRFTRFITNIQAAMDENEDLLHIRSNLIVHRARRGNQVDVFYATREDKWKRGEDGARKLVQRLIDYPERTFQTHNVMIFM.

The protein belongs to the bacterial ring-hydroxylating dioxygenase beta subunit family. In terms of assembly, the naphthalene dioxygenase (NDO) multicomponent enzyme system is composed of an electron transfer component and a dioxygenase component (iron sulfur protein (ISP)). The electron transfer component is composed of a ferredoxin reductase (NdoR) and a ferredoxin (NdoA), and the dioxygenase component is formed of a heterohexamer (trimer of heterodimers) of three large alpha subunits (NdoB) and three small beta subunits (NdoC).

It participates in aromatic compound metabolism; naphthalene degradation. In terms of biological role, component of the naphthalene dioxygenase (NDO) multicomponent enzyme system which catalyzes the incorporation of both atoms of molecular oxygen into naphthalene to form cis-(1R,2S)-dihydroxy-1,2-dihydronaphthalene. The beta subunit seems to have a structural role in the holoenzyme. In Pseudomonas aeruginosa, this protein is Naphthalene 1,2-dioxygenase system, small oxygenase component.